A 361-amino-acid chain; its full sequence is Serpentine receptor class epsilon-32 (361 aa).

7 consecutive transmembrane segments (helical) span residues 34 to 54 (IIEL…LYVM), 66 to 86 (ILYI…LITI), 124 to 144 (LLIF…YGIL), 168 to 188 (IPIA…LSVL), 195 to 215 (FLSH…YLFI), 256 to 276 (LVFV…ALAF), and 286 to 306 (FVEN…MLTI).

This sequence belongs to the nematode receptor-like protein sre family.

Its subcellular location is the membrane. This chain is Serpentine receptor class epsilon-32 (sre-32), found in Caenorhabditis elegans.